The primary structure comprises 486 residues: Cardiolipin synthase A (486 aa).

2 helical membrane-spanning segments follow: residues Ile3–Ile23 and Met38–Phe58. 2 PLD phosphodiesterase domains span residues Val219 to Tyr246 and Gln399 to Ser426. Active-site residues include His224, Lys226, Asp231, His404, Lys406, and Asp411.

This sequence belongs to the phospholipase D family. Cardiolipin synthase subfamily. ClsA sub-subfamily.

Its subcellular location is the cell inner membrane. The catalysed reaction is 2 a 1,2-diacyl-sn-glycero-3-phospho-(1'-sn-glycerol) = a cardiolipin + glycerol. Its function is as follows. Catalyzes the reversible phosphatidyl group transfer from one phosphatidylglycerol molecule to another to form cardiolipin (CL) (diphosphatidylglycerol) and glycerol. The protein is Cardiolipin synthase A of Buchnera aphidicola subsp. Acyrthosiphon pisum (strain APS) (Acyrthosiphon pisum symbiotic bacterium).